Consider the following 176-residue polypeptide: NAD(P)H-quinone oxidoreductase subunit 6, chloroplastic (176 aa).

Transmembrane regions (helical) follow at residues 10–30 (FLLV…VLLP), 32–52 (PIFS…LYIL), 61–81 (AQLL…VMFM), 92–112 (LWTV…FLLM), and 152–172 (FFLP…GAIS).

The protein belongs to the complex I subunit 6 family. In terms of assembly, NDH is composed of at least 16 different subunits, 5 of which are encoded in the nucleus.

It is found in the plastid. The protein localises to the chloroplast thylakoid membrane. It catalyses the reaction a plastoquinone + NADH + (n+1) H(+)(in) = a plastoquinol + NAD(+) + n H(+)(out). It carries out the reaction a plastoquinone + NADPH + (n+1) H(+)(in) = a plastoquinol + NADP(+) + n H(+)(out). Functionally, NDH shuttles electrons from NAD(P)H:plastoquinone, via FMN and iron-sulfur (Fe-S) centers, to quinones in the photosynthetic chain and possibly in a chloroplast respiratory chain. The immediate electron acceptor for the enzyme in this species is believed to be plastoquinone. Couples the redox reaction to proton translocation, and thus conserves the redox energy in a proton gradient. In Olimarabidopsis pumila (Dwarf rocket), this protein is NAD(P)H-quinone oxidoreductase subunit 6, chloroplastic (ndhG).